The following is a 384-amino-acid chain: Calreticulin-3 (384 aa).

The N-terminal stretch at 1–19 (MARALVQLWAICMLRVALA) is a signal peptide. The segment at 20–197 (TVYFQEEFLD…GQSIESGSIE (178 aa)) is N-domain. N-linked (GlcNAc...) asparagine glycosylation is present at asparagine 42. A disulfide bond links cysteine 105 and cysteine 137. Residues tyrosine 109, lysine 111, tyrosine 128, and aspartate 135 each coordinate an alpha-D-glucoside. Repeat copies occupy residues 191 to 202 (IESGSIEYDWNL), 208 to 219 (ETSPAESKDWEQ), 221 to 230 (KDNKAQDWEK), 234 to 245 (DASTSKQSDWNG), 249 to 259 (GDWPAPMLQKP), 263 to 271 (DGLKPEGIH), and 273 to 283 (DVWLHRKMKNT). The segment at 191 to 245 (IESGSIEYDWNLTSLKKETSPAESKDWEQTKDNKAQDWEKHFLDASTSKQSDWNG) is 4 X approximate repeats. Positions 198 to 294 (YDWNLTSLKK…YLTQYDLSEF (97 aa)) are P-domain. An N-linked (GlcNAc...) asparagine glycan is attached at asparagine 201. The segment at 249 to 283 (GDWPAPMLQKPPYQDGLKPEGIHKDVWLHRKMKNT) is 3 X approximate repeats. The interval 295–384 (ENIGAIGLEL…FNQFHRRNEL (90 aa)) is C-domain. Residue glutamate 303 coordinates an alpha-D-glucoside. The short motif at 381–384 (RNEL) is the Prevents secretion from ER element.

The protein belongs to the calreticulin family. In terms of assembly, component of an EIF2 complex at least composed of CELF1/CUGBP1, CALR, CALR3, EIF2S1, EIF2S2, HSP90B1 and HSPA5. In terms of tissue distribution, testis specific.

It is found in the endoplasmic reticulum lumen. Its function is as follows. During spermatogenesis, may act as a lectin-independent chaperone for specific client proteins such as ADAM3. Required for sperm fertility. CALR3 capacity for calcium-binding may be absent or much lower than that of CALR. The polypeptide is Calreticulin-3 (CALR3) (Homo sapiens (Human)).